The sequence spans 233 residues: Putative cobalt transport protein CbiM (233 aa).

Helical transmembrane passes span 9-29, 43-63, 75-95, 107-127, 138-158, and 177-197; these read PPMW…YGIV, PLVA…MPSV, LGAV…VLLF, TLGA…VIVY, TVGI…TTAV, and IVIY…LTVI.

The protein belongs to the CbiM family. In terms of assembly, forms an energy-coupling factor (ECF) transporter complex composed of an ATP-binding protein (A component, CbiO), a transmembrane protein (T component, CbiQ) and 2 possible substrate-capture proteins (S components, CbiM and CbiN) of unknown stoichimetry.

It localises to the cell membrane. The protein operates within cofactor biosynthesis; adenosylcobalamin biosynthesis. Its function is as follows. Part of the energy-coupling factor (ECF) transporter complex CbiMNOQ involved in cobalt import. This Methanocaldococcus jannaschii (strain ATCC 43067 / DSM 2661 / JAL-1 / JCM 10045 / NBRC 100440) (Methanococcus jannaschii) protein is Putative cobalt transport protein CbiM.